Reading from the N-terminus, the 126-residue chain is Glycerol dehydrogenase small subunit (126 aa).

Helical transmembrane passes span 13 to 33 (WLTL…VIAG), 41 to 61 (GSVY…FMLM), 67 to 87 (AFLY…EVGF), and 92 to 112 (LLPR…TIPV).

Its subcellular location is the cell membrane. It catalyses the reaction glycerol + A = dihydroxyacetone + AH2. Catalyzes the oxidation of glycerol to glycerone. Also acts, more slowly, on a number of other polyols including D-sorbitol, D-arabinitol, D-mannitol, meso-erythritol, adonitol and propylene glycol. The protein is Glycerol dehydrogenase small subunit (sldB) of Gluconobacter oxydans (strain 621H) (Gluconobacter suboxydans).